We begin with the raw amino-acid sequence, 142 residues long: Galactose-6-phosphate isomerase subunit LacA 2 (142 aa).

It belongs to the LacAB/RpiB family. Heteromultimeric protein consisting of LacA and LacB.

The enzyme catalyses aldehydo-D-galactose 6-phosphate = keto-D-tagatose 6-phosphate. It participates in carbohydrate metabolism; D-galactose 6-phosphate degradation; D-tagatose 6-phosphate from D-galactose 6-phosphate: step 1/1. The protein is Galactose-6-phosphate isomerase subunit LacA 2 of Streptococcus pyogenes serotype M1.